Here is a 290-residue protein sequence, read N- to C-terminus: NAD kinase (290 aa).

Asp72 (proton acceptor) is an active-site residue. Residues Asp72–Gly73, Asn146–Glu147, Arg174, Asp176, and Thr187–Ser192 contribute to the NAD(+) site.

It belongs to the NAD kinase family. Requires a divalent metal cation as cofactor.

The protein localises to the cytoplasm. It carries out the reaction NAD(+) + ATP = ADP + NADP(+) + H(+). Its function is as follows. Involved in the regulation of the intracellular balance of NAD and NADP, and is a key enzyme in the biosynthesis of NADP. Catalyzes specifically the phosphorylation on 2'-hydroxyl of the adenosine moiety of NAD to yield NADP. In Methylococcus capsulatus (strain ATCC 33009 / NCIMB 11132 / Bath), this protein is NAD kinase.